Consider the following 556-residue polypeptide: Cytochrome P450 4g1 (556 aa).

Residues Glu356 and Cys497 each coordinate heme.

The protein belongs to the cytochrome P450 family. Requires heme as cofactor.

It localises to the endoplasmic reticulum membrane. Its subcellular location is the microsome membrane. In terms of biological role, may be involved in the metabolism of insect hormones and in the breakdown of synthetic insecticides. The sequence is that of Cytochrome P450 4g1 (Cyp4g1) from Drosophila melanogaster (Fruit fly).